Here is a 490-residue protein sequence, read N- to C-terminus: Trigger factor (490 aa).

Positions 161–247 constitute a PPIase FKBP-type domain; sequence GDQVIVDIEA…VHEVKEAELP (87 aa). Residues 441–460 are compositionally biased toward low complexity; it reads AEPAEGTEPAAEEAVTAPEV. The segment at 441-490 is disordered; sequence AEPAEGTEPAAEEAVTAPEVVDGETTPASESAESLAVTETGSRADDDQAS. Residues 466 to 481 show a composition bias toward polar residues; the sequence is TPASESAESLAVTETG.

It belongs to the FKBP-type PPIase family. Tig subfamily.

Its subcellular location is the cytoplasm. The catalysed reaction is [protein]-peptidylproline (omega=180) = [protein]-peptidylproline (omega=0). In terms of biological role, involved in protein export. Acts as a chaperone by maintaining the newly synthesized protein in an open conformation. Functions as a peptidyl-prolyl cis-trans isomerase. The sequence is that of Trigger factor from Thermomicrobium roseum (strain ATCC 27502 / DSM 5159 / P-2).